Reading from the N-terminus, the 456-residue chain is Bifunctional protein GlmU (456 aa).

The pyrophosphorylase stretch occupies residues 1 to 229 (MLNNTMSVVI…ISETDGVNNR (229 aa)). UDP-N-acetyl-alpha-D-glucosamine is bound by residues 11-14 (LAAG), lysine 25, glutamine 76, 81-82 (GT), 103-105 (YGD), glycine 140, glutamate 154, asparagine 169, and asparagine 227. Aspartate 105 provides a ligand contact to Mg(2+). Asparagine 227 serves as a coordination point for Mg(2+). Residues 230–250 (LQLSRLERIYQAEQAEKLLLA) form a linker region. The interval 251–456 (GVMLRDPARF…QGWQRPVKKK (206 aa)) is N-acetyltransferase. UDP-N-acetyl-alpha-D-glucosamine-binding residues include arginine 333 and lysine 351. Histidine 363 (proton acceptor) is an active-site residue. The UDP-N-acetyl-alpha-D-glucosamine site is built by tyrosine 366 and asparagine 377. Residues alanine 380, 386-387 (NY), serine 405, alanine 423, and arginine 440 contribute to the acetyl-CoA site.

This sequence in the N-terminal section; belongs to the N-acetylglucosamine-1-phosphate uridyltransferase family. In the C-terminal section; belongs to the transferase hexapeptide repeat family. In terms of assembly, homotrimer. Requires Mg(2+) as cofactor.

The protein resides in the cytoplasm. The enzyme catalyses alpha-D-glucosamine 1-phosphate + acetyl-CoA = N-acetyl-alpha-D-glucosamine 1-phosphate + CoA + H(+). It catalyses the reaction N-acetyl-alpha-D-glucosamine 1-phosphate + UTP + H(+) = UDP-N-acetyl-alpha-D-glucosamine + diphosphate. The protein operates within nucleotide-sugar biosynthesis; UDP-N-acetyl-alpha-D-glucosamine biosynthesis; N-acetyl-alpha-D-glucosamine 1-phosphate from alpha-D-glucosamine 6-phosphate (route II): step 2/2. It participates in nucleotide-sugar biosynthesis; UDP-N-acetyl-alpha-D-glucosamine biosynthesis; UDP-N-acetyl-alpha-D-glucosamine from N-acetyl-alpha-D-glucosamine 1-phosphate: step 1/1. It functions in the pathway bacterial outer membrane biogenesis; LPS lipid A biosynthesis. Its function is as follows. Catalyzes the last two sequential reactions in the de novo biosynthetic pathway for UDP-N-acetylglucosamine (UDP-GlcNAc). The C-terminal domain catalyzes the transfer of acetyl group from acetyl coenzyme A to glucosamine-1-phosphate (GlcN-1-P) to produce N-acetylglucosamine-1-phosphate (GlcNAc-1-P), which is converted into UDP-GlcNAc by the transfer of uridine 5-monophosphate (from uridine 5-triphosphate), a reaction catalyzed by the N-terminal domain. This is Bifunctional protein GlmU from Enterobacter sp. (strain 638).